Consider the following 278-residue polypeptide: Biotin synthase (278 aa).

The Radical SAM core domain occupies 1–227 (MQIMLCAISN…QSVVMVAGGR (227 aa)). [4Fe-4S] cluster contacts are provided by Cys16, Cys20, and Cys23. Positions 60, 95, and 153 each coordinate [2Fe-2S] cluster.

Belongs to the radical SAM superfamily. Biotin synthase family. As to quaternary structure, homodimer. [4Fe-4S] cluster serves as cofactor. The cofactor is [2Fe-2S] cluster.

The catalysed reaction is (4R,5S)-dethiobiotin + (sulfur carrier)-SH + 2 reduced [2Fe-2S]-[ferredoxin] + 2 S-adenosyl-L-methionine = (sulfur carrier)-H + biotin + 2 5'-deoxyadenosine + 2 L-methionine + 2 oxidized [2Fe-2S]-[ferredoxin]. Its pathway is cofactor biosynthesis; biotin biosynthesis; biotin from 7,8-diaminononanoate: step 2/2. Functionally, catalyzes the conversion of dethiobiotin (DTB) to biotin by the insertion of a sulfur atom into dethiobiotin via a radical-based mechanism. This is Biotin synthase from Campylobacter jejuni (strain RM1221).